The chain runs to 354 residues: MDSLLELNRVNTAREIIRKKIQNTGRNSIYDLTGLCGGFEICEENLKLIETYVGPAIFSEKLNNAGLSHLSGNSKIHNAVCFNRTSSAILSTIMTLSKSFEKLVHYVPEKPAHPSIPRSCKIFGMEYFESDSLEEILSKIDENSFTAITGATMDHKVVSEEIACKIIDYAKSKNSPVFFDDASGARLRKLYKESPALEMGADLVVTSMDKLMDGPRAGLLAGDKNLVDKIYSEGLKFGLEAQAPIMAAVVTALERFDLNNLKDAFERAEKVDLSVFEAEKIEYKKTPTGFIIKNSSEEKLIETALKLLENYGIVTITAAGMPGASKNIRIDFCSKDAERISDEYVINAVLNSLK.

Position 210 is an N6-(pyridoxal phosphate)lysine (Lys210).

It belongs to the UPF0425 family. Requires pyridoxal 5'-phosphate as cofactor.

The sequence is that of UPF0425 pyridoxal phosphate-dependent protein MMP0002 from Methanococcus maripaludis (strain DSM 14266 / JCM 13030 / NBRC 101832 / S2 / LL).